The sequence spans 458 residues: Transcription factor PCF5 (458 aa).

4 disordered regions span residues 1–103 (MGDA…RGPR), 159–182 (GAGA…ENSD), 278–299 (MFHH…TTQQ), and 424–458 (RLPA…ASHH). Over residues 65-74 (RGGGGGGGGE) the composition is skewed to gly residues. In terms of domain architecture, TCP spans 89-147 (RKDRHSKVCTARGPRDRRVRLSAHTAIQFYDVQDRLGYDRPSKAVDWLIKNAKDAIDKL).

As to quaternary structure, forms homodimers and heterodimers.

The protein localises to the nucleus. In terms of biological role, transcription activator. Binds the promoter core sequence 5'-GGNCC-3'. This is Transcription factor PCF5 (PCF5) from Oryza sativa subsp. japonica (Rice).